Reading from the N-terminus, the 102-residue chain is Co-chaperonin GroES (102 aa).

The protein belongs to the GroES chaperonin family. In terms of assembly, heptamer of 7 subunits arranged in a ring. Interacts with the chaperonin GroEL.

It is found in the cytoplasm. Functionally, together with the chaperonin GroEL, plays an essential role in assisting protein folding. The GroEL-GroES system forms a nano-cage that allows encapsulation of the non-native substrate proteins and provides a physical environment optimized to promote and accelerate protein folding. GroES binds to the apical surface of the GroEL ring, thereby capping the opening of the GroEL channel. This Chlamydia caviae (strain ATCC VR-813 / DSM 19441 / 03DC25 / GPIC) (Chlamydophila caviae) protein is Co-chaperonin GroES.